The chain runs to 236 residues: Phosphoribosylaminoimidazole-succinocarboxamide synthase (236 aa).

It belongs to the SAICAR synthetase family.

The catalysed reaction is 5-amino-1-(5-phospho-D-ribosyl)imidazole-4-carboxylate + L-aspartate + ATP = (2S)-2-[5-amino-1-(5-phospho-beta-D-ribosyl)imidazole-4-carboxamido]succinate + ADP + phosphate + 2 H(+). Its pathway is purine metabolism; IMP biosynthesis via de novo pathway; 5-amino-1-(5-phospho-D-ribosyl)imidazole-4-carboxamide from 5-amino-1-(5-phospho-D-ribosyl)imidazole-4-carboxylate: step 1/2. The sequence is that of Phosphoribosylaminoimidazole-succinocarboxamide synthase from Pseudomonas entomophila (strain L48).